We begin with the raw amino-acid sequence, 268 residues long: Putative ABC transporter ATP-binding protein MK0182 (268 aa).

The 229-residue stretch at Met-1–Lys-229 folds into the ABC transporter domain. Residue Gly-29–Thr-36 participates in ATP binding.

Belongs to the ABC transporter superfamily.

The protein localises to the cell membrane. In terms of biological role, probably part of an ABC transporter complex. Responsible for energy coupling to the transport system. This is Putative ABC transporter ATP-binding protein MK0182 from Methanopyrus kandleri (strain AV19 / DSM 6324 / JCM 9639 / NBRC 100938).